Consider the following 118-residue polypeptide: Large ribosomal subunit protein bL20 (118 aa).

This sequence belongs to the bacterial ribosomal protein bL20 family.

Functionally, binds directly to 23S ribosomal RNA and is necessary for the in vitro assembly process of the 50S ribosomal subunit. It is not involved in the protein synthesizing functions of that subunit. This is Large ribosomal subunit protein bL20 from Staphylococcus aureus (strain Mu3 / ATCC 700698).